The chain runs to 156 residues: Transcriptional repressor NrdR (156 aa).

Residues 3–34 (CPKCNSTQSKVVDSRHADELNAIRRRRECENC) fold into a zinc finger. One can recognise an ATP-cone domain in the interval 49–139 (LIVVKKDGTR…VYKEFKDVDQ (91 aa)).

Belongs to the NrdR family. Zn(2+) is required as a cofactor.

In terms of biological role, negatively regulates transcription of bacterial ribonucleotide reductase nrd genes and operons by binding to NrdR-boxes. This Staphylococcus aureus (strain NCTC 8325 / PS 47) protein is Transcriptional repressor NrdR.